A 70-amino-acid chain; its full sequence is U-scoloptoxin(20)-Sm1a (70 aa).

Positions 1 to 24 are cleaved as a signal peptide; it reads MKKRSQVFCIFIAMVLLILPLSMS.

This sequence belongs to the scoloptoxin-20 family. Contains 3 disulfide bonds. Expressed by the venom gland.

Its subcellular location is the secreted. The polypeptide is U-scoloptoxin(20)-Sm1a (Scolopendra morsitans (Tanzanian blue ringleg centipede)).